Consider the following 334-residue polypeptide: Zinc finger Ran-binding domain-containing protein 2 (334 aa).

RanBP2-type zinc fingers lie at residues 9-40 (SDGDWICPDKKCGNVNFARRTSCNRCGREKTT) and 65-94 (SANDWQCKTCGNVNWARRSECNMCNTPKYA). Positions 117-334 (REESDGEYDE…SGSRTSSKKK (218 aa)) are disordered. Residues 150-163 (DKESEGEDEEDEDG) show a composition bias toward acidic residues. Basic residues predominate over residues 196 to 212 (KKKKSNRRSRSKSRSSH). Low complexity-rich tracts occupy residues 213–224 (SRSSSRSSSHSS) and 258–285 (SRSSSRSYRGSSTPRKRSYSSSRSSSSP). Positions 302–318 (RKKRRSRSRSPERRRRS) are enriched in basic residues. Over residues 319-334 (SSGSSHSGSRTSSKKK) the composition is skewed to low complexity.

This sequence belongs to the ZRANB2 family.

Its subcellular location is the nucleus. Functionally, may regulate alternative splicing by interfering with constitutive 5'-splice site selection. This chain is Zinc finger Ran-binding domain-containing protein 2, found in Gallus gallus (Chicken).